A 250-amino-acid polypeptide reads, in one-letter code: 5'-nucleotidase SurE (250 aa).

Residues Asp-8, Asp-9, Ser-39, and Asn-91 each coordinate a divalent metal cation.

The protein belongs to the SurE nucleotidase family. A divalent metal cation serves as cofactor.

The protein resides in the cytoplasm. The catalysed reaction is a ribonucleoside 5'-phosphate + H2O = a ribonucleoside + phosphate. Nucleotidase that shows phosphatase activity on nucleoside 5'-monophosphates. The sequence is that of 5'-nucleotidase SurE from Leptospira borgpetersenii serovar Hardjo-bovis (strain JB197).